The following is a 362-amino-acid chain: Protein U8 (362 aa).

This sequence belongs to the herpesviridae US22 family.

This chain is Protein U8 (U8), found in Human herpesvirus 7 (strain JI) (HHV-7).